We begin with the raw amino-acid sequence, 117 residues long: Photosystem II reaction center Psb28 protein (117 aa).

The protein belongs to the Psb28 family. As to quaternary structure, part of the photosystem II complex.

It is found in the cellular thylakoid membrane. The protein is Photosystem II reaction center Psb28 protein of Prochlorococcus marinus (strain MIT 9211).